Reading from the N-terminus, the 516-residue chain is MHGRKDDAQKQPVKNQLGLNPQSHLPELQLFQAEGKIYKYDHMEKSVNSSSLVSPPQRISSTVKTHISHTYECNFVDSLFTQKEKANIGTEHYKCSERGKAFHQGLHFTIHQIIHTKETQFKCDICGKIFNKKSNLASHQRIHTGEKPYKCNECGKVFHNMSHLAQHRRIHTGEKPYKCNECGKVFNQISHLAQHQRIHTGEKPYKCNECGKVFHQISHLAQHRTIHTGEKPYECNKCGKVFSRNSYLVQHLIIHTGEKPYRCNVCGKVFHHISHLAQHQRIHTGEKPYKCNECGKVFSHKSSLVNHWRIHTGEKPYKCNECGKVFSHKSSLVNHWRIHTGEKPYKCNECGKVFSRNSYLAQHLIIHAGEKPYKCDECDKAFSQNSHLVQHHRIHTGEKPYKCDECGKVFSQNSYLAYHWRIHTGEKAYKCNECGKVFGLNSSLAHHRKIHTGEKPFKCNECGKAFSMRSSLTNHHAIHTGEKHFKCNECGKLFRDNSYLVRHQRFHAGKKSNTCN.

Positions 1-20 are disordered; it reads MHGRKDDAQKQPVKNQLGLN. The C2H2-type 1; degenerate zinc finger occupies 93-115; the sequence is YKCSERGKAFHQGLHFTIHQIIH. 14 C2H2-type zinc fingers span residues 121-143, 149-171, 177-199, 205-227, 233-255, 261-283, 289-311, 317-339, 345-367, 373-395, 401-423, 429-451, 457-479, and 485-507; these read FKCD…QRIH, YKCN…RRIH, YKCN…QRIH, YKCN…RTIH, YECN…LIIH, YRCN…QRIH, YKCN…WRIH, YKCN…LIIH, YKCD…HRIH, YKCD…WRIH, YKCN…RKIH, FKCN…HAIH, and FKCN…QRFH.

This sequence belongs to the krueppel C2H2-type zinc-finger protein family.

It localises to the nucleus. Functionally, may be involved in transcriptional regulation. The sequence is that of Zinc finger protein 83 (ZNF83) from Homo sapiens (Human).